The sequence spans 199 residues: Photosystem I reaction center subunit XI (199 aa).

The next 2 membrane-spanning stretches (helical) occupy residues 108–128 (LTAG…LFVL) and 165–185 (FWLG…TLHL).

This sequence belongs to the PsaL family.

The protein resides in the cellular thylakoid membrane. The chain is Photosystem I reaction center subunit XI from Prochlorococcus marinus (strain MIT 9301).